A 373-amino-acid polypeptide reads, in one-letter code: Protein U3 (373 aa).

It belongs to the herpesviridae US22 family.

This chain is Protein U3 (U3), found in Human herpesvirus 6A (strain Uganda-1102) (HHV-6 variant A).